Here is a 130-residue protein sequence, read N- to C-terminus: Small ribosomal subunit protein uS8 (130 aa).

It belongs to the universal ribosomal protein uS8 family. As to quaternary structure, part of the 30S ribosomal subunit.

In terms of biological role, one of the primary rRNA binding proteins, it binds directly to 16S rRNA central domain where it helps coordinate assembly of the platform of the 30S subunit. In Pyrobaculum neutrophilum (strain DSM 2338 / JCM 9278 / NBRC 100436 / V24Sta) (Thermoproteus neutrophilus), this protein is Small ribosomal subunit protein uS8.